Here is a 364-residue protein sequence, read N- to C-terminus: Paraneoplastic antigen Ma2 homolog (364 aa).

A2 is subject to N-acetylalanine. Positions 335-353 (EEEEASFENESIEEPEEGD) are enriched in acidic residues. Residues 335 to 364 (EEEEASFENESIEEPEEGDGYGRWNHEGDD) form a disordered region.

It belongs to the PNMA family.

It is found in the nucleus. Its subcellular location is the nucleolus. This is Paraneoplastic antigen Ma2 homolog (PNMA2) from Pongo abelii (Sumatran orangutan).